The primary structure comprises 338 residues: MTDYVTDIAVIGAGPVGIFTVFQAGMLKMRCCVIDALSEIGGQCLALYPEKPIYDIPGYPVINGKELIDSLKKQSEPFNPQYLLGQVAEKIEDYSDYFLIRTTTGIVVQSKVIIIAAGAGAFGPNRLPIDNILDYENKSVFYQVRKVSDFCDKNIMIAGGGDSAADWAVELSKVAKQLYVVHRRKNFRCAPNTALQMDNLSQSGKIKIIVPYQVKKLCGENGKLHSVIVKNITNHEEMALQVDYLFPFFGTSANLGPILNWGMEVKNYQILVNAETCLTNRNRIYAVGDIATYPGKLKLILTGFSEAAMACHHIYHVIYPNSPLNFQYSTSKGIPENC.

Positions 35, 43, 48, 88, 122, 289, and 330 each coordinate FAD.

The protein belongs to the ferredoxin--NADP reductase type 2 family. As to quaternary structure, homodimer. It depends on FAD as a cofactor.

The catalysed reaction is 2 reduced [2Fe-2S]-[ferredoxin] + NADP(+) + H(+) = 2 oxidized [2Fe-2S]-[ferredoxin] + NADPH. The polypeptide is Ferredoxin--NADP reductase (Ehrlichia chaffeensis (strain ATCC CRL-10679 / Arkansas)).